Here is a 660-residue protein sequence, read N- to C-terminus: MKAVVFAYHDIGCTGIRALAEAGYEIAAIFTHADNAAENHFFASVARTAAELGVPVYAPEDANHPLWVDRIRGMKPDAIFSFHYRHMLNDDIINSASLGAFNLHASLLPKYRGRAPLNWVLVNGEQETGVTLHRMVKRADAGAIIAQNTVAIADRDDALTLHRKVCAAAGELLAEALPAIKIGEFSEHQQDESQASYVGRRTPEDGRIDWHLPAQRVYNLVRAVTDPWPGAFGYVGTGKFIVWQSKIHYDRAAAKPGTVLSVAPFVVACAEGALEIVTGQSESGVYMQGSQLAQTLGLVAGARLYNHPAAVAKRRTRVLILGVNGFIGNHLTERLLVDDNFEVFGLDIGSDAIGRFIGHERFHFVEGDISIHSEWIEYHIKKCDVVLPLVAIATPIEYTRNPLRVFELDFEENLKIIRDCVKYKKRIIFPSTSEVYGMCTDASFDEDSSNLVVGPINKQRWIYSVSKQLLDRVIWAYGDKEGLRFTLFRPFNWMGPRLDNLNAARIGSSRAITQLILNLVEGSPIKLIDGGRQKRCFTDIHDGIEALFLIIENKQKNCDGQIINIGNPENEASIKQLAEQLLESFERHPLRDRFPPFAGFREVESSTYYGKGYQDVEHRKPSIRNAKQLLNWQPTIAMDKTIDDTLDFFLQSVEPGDAEE.

The formyltransferase ArnAFT stretch occupies residues 1-304 (MKAVVFAYHD…TLGLVAGARL (304 aa)). Catalysis depends on His-104, which acts as the Proton donor; for formyltransferase activity. (6R)-10-formyltetrahydrofolate-binding positions include Arg-114 and 136-140 (VKRAD). The tract at residues 314-660 (RRTRVLILGV…QSVEPGDAEE (347 aa)) is dehydrogenase ArnADH. NAD(+) is bound by residues Asp-347 and 368–369 (DI). Residues Ala-393, Tyr-398, and 432 to 433 (TS) each bind UDP-alpha-D-glucuronate. Catalysis depends on Glu-434, which acts as the Proton acceptor; for decarboxylase activity. Residues Arg-460, Asn-492, 526 to 535 (KLIDGGRQKR), and Tyr-613 each bind UDP-alpha-D-glucuronate. Catalysis depends on Arg-619, which acts as the Proton donor; for decarboxylase activity.

The protein in the N-terminal section; belongs to the Fmt family. UDP-L-Ara4N formyltransferase subfamily. It in the C-terminal section; belongs to the NAD(P)-dependent epimerase/dehydratase family. UDP-glucuronic acid decarboxylase subfamily. In terms of assembly, homohexamer, formed by a dimer of trimers.

It carries out the reaction UDP-alpha-D-glucuronate + NAD(+) = UDP-beta-L-threo-pentopyranos-4-ulose + CO2 + NADH. It catalyses the reaction UDP-4-amino-4-deoxy-beta-L-arabinose + (6R)-10-formyltetrahydrofolate = UDP-4-deoxy-4-formamido-beta-L-arabinose + (6S)-5,6,7,8-tetrahydrofolate + H(+). The protein operates within nucleotide-sugar biosynthesis; UDP-4-deoxy-4-formamido-beta-L-arabinose biosynthesis; UDP-4-deoxy-4-formamido-beta-L-arabinose from UDP-alpha-D-glucuronate: step 1/3. Its pathway is nucleotide-sugar biosynthesis; UDP-4-deoxy-4-formamido-beta-L-arabinose biosynthesis; UDP-4-deoxy-4-formamido-beta-L-arabinose from UDP-alpha-D-glucuronate: step 3/3. It functions in the pathway bacterial outer membrane biogenesis; lipopolysaccharide biosynthesis. In terms of biological role, bifunctional enzyme that catalyzes the oxidative decarboxylation of UDP-glucuronic acid (UDP-GlcUA) to UDP-4-keto-arabinose (UDP-Ara4O) and the addition of a formyl group to UDP-4-amino-4-deoxy-L-arabinose (UDP-L-Ara4N) to form UDP-L-4-formamido-arabinose (UDP-L-Ara4FN). The modified arabinose is attached to lipid A and is required for resistance to polymyxin and cationic antimicrobial peptides. The polypeptide is Bifunctional polymyxin resistance protein ArnA (Erwinia tasmaniensis (strain DSM 17950 / CFBP 7177 / CIP 109463 / NCPPB 4357 / Et1/99)).